Here is a 235-residue protein sequence, read N- to C-terminus: 5'-methylthioadenosine/S-adenosylhomocysteine nucleosidase (235 aa).

E12 serves as the catalytic Proton acceptor. Substrate is bound by residues G78, I152, and 173–174 (ME). The active-site Proton donor is the D197.

It belongs to the PNP/UDP phosphorylase family. MtnN subfamily. Homodimer.

The enzyme catalyses S-adenosyl-L-homocysteine + H2O = S-(5-deoxy-D-ribos-5-yl)-L-homocysteine + adenine. The catalysed reaction is S-methyl-5'-thioadenosine + H2O = 5-(methylsulfanyl)-D-ribose + adenine. It carries out the reaction 5'-deoxyadenosine + H2O = 5-deoxy-D-ribose + adenine. It functions in the pathway amino-acid biosynthesis; L-methionine biosynthesis via salvage pathway; S-methyl-5-thio-alpha-D-ribose 1-phosphate from S-methyl-5'-thioadenosine (hydrolase route): step 1/2. Functionally, catalyzes the irreversible cleavage of the glycosidic bond in both 5'-methylthioadenosine (MTA) and S-adenosylhomocysteine (SAH/AdoHcy) to adenine and the corresponding thioribose, 5'-methylthioribose and S-ribosylhomocysteine, respectively. Also cleaves 5'-deoxyadenosine, a toxic by-product of radical S-adenosylmethionine (SAM) enzymes, into 5-deoxyribose and adenine. Thus, is required for in vivo function of the radical SAM enzymes biotin synthase and lipoic acid synthase, that are inhibited by 5'-deoxyadenosine accumulation. The sequence is that of 5'-methylthioadenosine/S-adenosylhomocysteine nucleosidase from Proteus mirabilis (strain HI4320).